The sequence spans 367 residues: Diphthine methyltransferase homolog (367 aa).

WD repeat units follow at residues 84-124 (NFNS…KKLE), 132-173 (SLSN…SKVT), 180-220 (AHDY…NHND), and 234-274 (RCDM…QPII).

The protein belongs to the DPH7 family.

The catalysed reaction is diphthine methyl ester-[translation elongation factor 2] + H2O = diphthine-[translation elongation factor 2] + methanol + H(+). It participates in protein modification; peptidyl-diphthamide biosynthesis. Its function is as follows. Catalyzes the demethylation of diphthine methyl ester to form diphthine, an intermediate diphthamide biosynthesis, a post-translational modification of histidine which occurs in translation elongation factor 2 (efbA). This chain is Diphthine methyltransferase homolog (wdr85), found in Dictyostelium discoideum (Social amoeba).